An 88-amino-acid chain; its full sequence is Cuticle protein 70, isoforms A and B (88 aa).

A run of 5 repeats spans residues 7–10, 48–51, 55–58, 60–63, and 66–69.

Its function is as follows. Component of the cuticle of migratory locust which contains more than 100 different structural proteins. This chain is Cuticle protein 70, isoforms A and B, found in Locusta migratoria (Migratory locust).